The following is a 248-amino-acid chain: Carbohydrate deacetylase 2 (248 aa).

Residues histidine 59 and histidine 123 each coordinate Mg(2+).

The protein belongs to the YdjC deacetylase family. Homodimer. Requires Mg(2+) as cofactor.

In terms of biological role, probably catalyzes the deacetylation of acetylated carbohydrates an important step in the degradation of oligosaccharides. The chain is Carbohydrate deacetylase 2 from Listeria innocua serovar 6a (strain ATCC BAA-680 / CLIP 11262).